A 581-amino-acid chain; its full sequence is Arginine--tRNA ligase (581 aa).

A 'HIGH' region motif is present at residues 126 to 136 (PNLAKEMHVGH).

The protein belongs to the class-I aminoacyl-tRNA synthetase family. In terms of assembly, monomer.

The protein localises to the cytoplasm. The enzyme catalyses tRNA(Arg) + L-arginine + ATP = L-arginyl-tRNA(Arg) + AMP + diphosphate. This Shewanella frigidimarina (strain NCIMB 400) protein is Arginine--tRNA ligase.